The sequence spans 70 residues: Mu-conotoxin-like Am3.4 (70 aa).

The signal sequence occupies residues 1–20; it reads MMYKLGVLLIICLLLFPLTA. A propeptide spanning residues 21 to 53 is cleaved from the precursor; it reads VPQDGDQPADRPAERMQDDISFEHDRFFDPVKR. 3 cysteine pairs are disulfide-bonded: cysteine 54/cysteine 69, cysteine 55/cysteine 65, and cysteine 61/cysteine 68. Proline 67 carries the post-translational modification 4-hydroxyproline; partial; in major form. Cysteine 69 carries the post-translational modification Cysteine amide.

The protein belongs to the conotoxin M superfamily. Contains 3 disulfide bonds. Expressed by the venom duct.

It localises to the secreted. Its function is as follows. Mu-conotoxins block voltage-gated sodium channels (Nav). In Conus amadis (Amadis cone), this protein is Mu-conotoxin-like Am3.4.